A 561-amino-acid polypeptide reads, in one-letter code: Alpha-1D adrenergic receptor (561 aa).

At 1–90 the chain is on the extracellular side; the sequence is MTFRDILSVT…VGGLVVSAQG (90 aa). The segment at 10–71 is disordered; sequence TFEGPRSSSS…SSTGEPGAAA (62 aa). A compositionally biased stretch (gly residues) spans 21–56; that stretch reads GGSGAGGGAGTVGPEGGAVGGVPGATGGGAVVGTGS. Residues Asn-60 and Asn-76 are each glycosylated (N-linked (GlcNAc...) asparagine). The helical transmembrane segment at 91–115 threads the bilayer; it reads VGVGVFLAAFILTAVAGNLLVILSV. Over 116 to 127 the chain is Cytoplasmic; sequence ACNRHLQTVTNY. The chain crosses the membrane as a helical span at residues 128-153; it reads FIVNLAVADLLLSAAVLPFSATMEVL. At 154–163 the chain is on the extracellular side; that stretch reads GFWAFGRTFC. A helical transmembrane segment spans residues 164 to 186; that stretch reads DVWAAVDVLCCTASILSLCTISV. Residues 187–207 are Cytoplasmic-facing; that stretch reads DRYVGVRHSLKYPAIMTERKA. A helical transmembrane segment spans residues 208 to 232; the sequence is AAILALLWAVALVVSVGPLLGWKEP. Residues 233-245 lie on the Extracellular side of the membrane; it reads VPPDERFCGITEE. A helical membrane pass occupies residues 246 to 269; it reads VGYAIFSSVCSFYLPMAVIVVMYC. Residues 270–342 are Cytoplasmic-facing; sequence RVYVVARSTT…KFSREKKAAK (73 aa). The helical transmembrane segment at 343 to 367 threads the bilayer; sequence TLAIVVGVFVLCWFPFFFVLPLGSL. Over 368 to 374 the chain is Extracellular; the sequence is FPQLKPS. Residues 375–399 form a helical membrane-spanning segment; that stretch reads EGVFKVIFWLGYFNSCVNPLIYPCS. Over 400 to 561 the chain is Cytoplasmic; that stretch reads SREFKRAFLR…DYSNLRETDI (162 aa). A lipid anchor (S-palmitoyl cysteine) is attached at Cys-413. Residues 452–481 are disordered; sequence APLALTAHPGAGSADTPETQDSVSSSRKPA. Residues 467–479 are compositionally biased toward polar residues; the sequence is TPETQDSVSSSRK.

This sequence belongs to the G-protein coupled receptor 1 family. Adrenergic receptor subfamily. ADRA1D sub-subfamily. Interacts with FLNA (via filamin repeat 21); increases PKA-mediated phosphorylation of FLNA. In terms of processing, palmitoylated. Palmitoylation by ZDHHC21 may increase the expression of the receptor and regulate downstream signaling. In terms of tissue distribution, vas deferens, hippocampus, cerebral cortex, aorta, brain stem, heart and spleen.

It is found in the cell membrane. Its function is as follows. This alpha-adrenergic receptor mediates its effect through the influx of extracellular calcium. The sequence is that of Alpha-1D adrenergic receptor (Adra1d) from Rattus norvegicus (Rat).